The primary structure comprises 245 residues: Acetylglutamate kinase (245 aa).

Residues 41–42 (GG), R63, and N156 each bind substrate.

This sequence belongs to the acetylglutamate kinase family. ArgB subfamily.

Its subcellular location is the cytoplasm. The enzyme catalyses N-acetyl-L-glutamate + ATP = N-acetyl-L-glutamyl 5-phosphate + ADP. It participates in amino-acid biosynthesis; L-arginine biosynthesis; N(2)-acetyl-L-ornithine from L-glutamate: step 2/4. Catalyzes the ATP-dependent phosphorylation of N-acetyl-L-glutamate. The sequence is that of Acetylglutamate kinase from Staphylococcus epidermidis (strain ATCC 35984 / DSM 28319 / BCRC 17069 / CCUG 31568 / BM 3577 / RP62A).